A 978-amino-acid polypeptide reads, in one-letter code: Rab3 GTPase-activating protein catalytic subunit (978 aa).

3 disordered regions span residues 533 to 554, 586 to 621, and 908 to 936; these read EGKKGNPLYSSSESSVNKTASD, HSDTEELKESGQESARKAKEETKENPSPKPEGRLHQ, and EEEPKRSSSSDDRRQTSGTDFPSPAGREL. A compositionally biased stretch (polar residues) spans 540–554; it reads LYSSSESSVNKTASD. Basic and acidic residues-rich tracts occupy residues 586 to 619 and 909 to 922; these read HSDTEELKESGQESARKAKEETKENPSPKPEGRL and EEPKRSSSSDDRRQ.

It belongs to the Rab3-GAP catalytic subunit family. As to quaternary structure, the Rab3 GTPase-activating complex is a heterodimer composed of rab3gap1 and rab3gap2. The Rab3 GTPase-activating complex interacts with DMXL2. Interacts with LMAN1.

Its subcellular location is the cytoplasm. It is found in the endoplasmic reticulum. The protein resides in the golgi apparatus. It localises to the cis-Golgi network. Functionally, catalytic subunit of the Rab3 GTPase-activating (Rab3GAP) complex composed of rab3gap1 and rab3gap2, which has GTPase-activating protein (GAP) activity towards various Rab3 subfamily members (RAB3A, RAB3B, RAB3C and RAB3D), RAB5A and RAB43, and guanine nucleotide exchange factor (GEF) activity towards RAB18. As part of the Rab3GAP complex, acts as a GAP for Rab3 proteins by converting active RAB3-GTP to the inactive form RAB3-GDP. Rab3 proteins are involved in regulated exocytosis of neurotransmitters and hormones. The Rab3GAP complex, acts as a GEF for RAB18 by promoting the conversion of inactive RAB18-GDP to the active form RAB18-GTP. Recruits and stabilizes RAB18 at the cis-Golgi membrane where RAB18 is most likely activated. Also involved in RAB18 recruitment at the endoplasmic reticulum (ER) membrane where it maintains proper ER structure. Required for normal eye and brain development. May participate in neurodevelopmental processes such as proliferation, migration and differentiation before synapse formation, and non-synaptic vesicular release of neurotransmitters. The chain is Rab3 GTPase-activating protein catalytic subunit (rab3gap1) from Xenopus laevis (African clawed frog).